Here is a 345-residue protein sequence, read N- to C-terminus: Holliday junction branch migration complex subunit RuvB (345 aa).

The large ATPase domain (RuvB-L) stretch occupies residues 4–185 (LDNRFVTPLS…FGVLCPMEFY (182 aa)). ATP is bound by residues Leu-24, Arg-25, Gly-66, Lys-69, Thr-70, Thr-71, 132–134 (EDY), Arg-175, Tyr-185, and Arg-222. Thr-70 lines the Mg(2+) pocket. The segment at 186 to 256 (NEEELKDIIV…MTNKALNLLE (71 aa)) is small ATPAse domain (RuvB-S). The head domain (RuvB-H) stretch occupies residues 259-345 (KEGFDSIDTK…ENINQYKFKI (87 aa)). Arg-314 and Arg-319 together coordinate DNA.

Belongs to the RuvB family. In terms of assembly, homohexamer. Forms an RuvA(8)-RuvB(12)-Holliday junction (HJ) complex. HJ DNA is sandwiched between 2 RuvA tetramers; dsDNA enters through RuvA and exits via RuvB. An RuvB hexamer assembles on each DNA strand where it exits the tetramer. Each RuvB hexamer is contacted by two RuvA subunits (via domain III) on 2 adjacent RuvB subunits; this complex drives branch migration. In the full resolvosome a probable DNA-RuvA(4)-RuvB(12)-RuvC(2) complex forms which resolves the HJ.

Its subcellular location is the cytoplasm. It carries out the reaction ATP + H2O = ADP + phosphate + H(+). Functionally, the RuvA-RuvB-RuvC complex processes Holliday junction (HJ) DNA during genetic recombination and DNA repair, while the RuvA-RuvB complex plays an important role in the rescue of blocked DNA replication forks via replication fork reversal (RFR). RuvA specifically binds to HJ cruciform DNA, conferring on it an open structure. The RuvB hexamer acts as an ATP-dependent pump, pulling dsDNA into and through the RuvAB complex. RuvB forms 2 homohexamers on either side of HJ DNA bound by 1 or 2 RuvA tetramers; 4 subunits per hexamer contact DNA at a time. Coordinated motions by a converter formed by DNA-disengaged RuvB subunits stimulates ATP hydrolysis and nucleotide exchange. Immobilization of the converter enables RuvB to convert the ATP-contained energy into a lever motion, pulling 2 nucleotides of DNA out of the RuvA tetramer per ATP hydrolyzed, thus driving DNA branch migration. The RuvB motors rotate together with the DNA substrate, which together with the progressing nucleotide cycle form the mechanistic basis for DNA recombination by continuous HJ branch migration. Branch migration allows RuvC to scan DNA until it finds its consensus sequence, where it cleaves and resolves cruciform DNA. This Clostridium tetani (strain Massachusetts / E88) protein is Holliday junction branch migration complex subunit RuvB.